Reading from the N-terminus, the 194-residue chain is uncharacterized protein (194 aa).

The region spanning 6–66 is the HTH tetR-type domain; it reads EFDTALVLHR…SAVKSYLEGK (61 aa). The H-T-H motif DNA-binding region spans 29 to 48; sequence SLQDLLSHLGIARQSLYDTY.

This is an uncharacterized protein from Bacillus subtilis (strain 168).